The primary structure comprises 494 residues: UDP-N-acetylmuramoyl-L-alanyl-D-glutamate--L-lysine ligase (494 aa).

Residue S30 participates in UDP-N-acetyl-alpha-D-muramoyl-L-alanyl-D-glutamate binding. 110–116 (GTNGKTS) contacts ATP. Residues 152–153 (TT), S179, and R187 contribute to the UDP-N-acetyl-alpha-D-muramoyl-L-alanyl-D-glutamate site. Position 219 is an N6-carboxylysine (K219). The L-lysine recognition motif signature appears at 406 to 409 (DNPA).

The protein belongs to the MurCDEF family. MurE subfamily. Post-translationally, carboxylation is probably crucial for Mg(2+) binding and, consequently, for the gamma-phosphate positioning of ATP.

It is found in the cytoplasm. It carries out the reaction UDP-N-acetyl-alpha-D-muramoyl-L-alanyl-D-glutamate + L-lysine + ATP = UDP-N-acetyl-alpha-D-muramoyl-L-alanyl-gamma-D-glutamyl-L-lysine + ADP + phosphate + H(+). Its pathway is cell wall biogenesis; peptidoglycan biosynthesis. Functionally, catalyzes the addition of L-lysine to the nucleotide precursor UDP-N-acetylmuramoyl-L-alanyl-D-glutamate (UMAG) in the biosynthesis of bacterial cell-wall peptidoglycan. This is UDP-N-acetylmuramoyl-L-alanyl-D-glutamate--L-lysine ligase from Staphylococcus aureus (strain MW2).